The primary structure comprises 167 residues: MAEIMADSELAPKFAPFIGMAGIAAAMIFGSAGAAYGTAKSGIGIAGVGTFRPDLIMKCLIPVVMSGIIAVYALVVAVLIAQDLGPPGSGQHYSLFNGFMHLACGLSVGLTGLAAGYCIGIVGDKGVRSFMLQSRIFVGMVLILIFGEVLGLYGLIVALILNTKSKG.

At 1–13 the chain is on the lumenal side; it reads MAEIMADSELAPK. The helical transmembrane segment at 14 to 34 threads the bilayer; it reads FAPFIGMAGIAAAMIFGSAGA. Residues 35–59 lie on the Cytoplasmic side of the membrane; the sequence is AYGTAKSGIGIAGVGTFRPDLIMKC. The helical transmembrane segment at 60–80 threads the bilayer; it reads LIPVVMSGIIAVYALVVAVLI. Topologically, residues 81–101 are lumenal; sequence AQDLGPPGSGQHYSLFNGFMH. Residues 102–122 form a helical membrane-spanning segment; that stretch reads LACGLSVGLTGLAAGYCIGIV. Residues 123–140 are Cytoplasmic-facing; it reads GDKGVRSFMLQSRIFVGM. A helical membrane pass occupies residues 141–161; the sequence is VLILIFGEVLGLYGLIVALIL. Residues 162-167 are Lumenal-facing; that stretch reads NTKSKG.

This sequence belongs to the V-ATPase proteolipid subunit family. In terms of assembly, V-ATPase is a heteromultimeric enzyme composed of a peripheral catalytic V1 complex (components A to H) attached to an integral membrane V0 proton pore complex (components: a, c, c', c'', d, e, f and VOA1). The decameric c-ring forms the proton-conducting pore, and is composed of eight proteolipid subunits c, one subunit c' and one subunit c''.

Its subcellular location is the vacuole membrane. Functionally, proton-conducting pore forming subunit of the V0 complex of vacuolar(H+)-ATPase (V-ATPase), a multisubunit enzyme composed of a peripheral complex (V1) that hydrolyzes ATP and a membrane integral complex (V0) that translocates protons. V-ATPase is responsible for acidifying and maintaining the pH of intracellular compartments. In Neurospora crassa (strain ATCC 24698 / 74-OR23-1A / CBS 708.71 / DSM 1257 / FGSC 987), this protein is V-type proton ATPase subunit c' (vma-11).